A 245-amino-acid chain; its full sequence is Orotidine 5'-phosphate decarboxylase (245 aa).

Substrate contacts are provided by residues Asp-22, Lys-44, 71–80, Thr-131, Arg-192, Gln-201, Gly-221, and Arg-222; that span reads DLKFHDIPNT. The active-site Proton donor is the Lys-73.

It belongs to the OMP decarboxylase family. Type 1 subfamily. Homodimer.

It catalyses the reaction orotidine 5'-phosphate + H(+) = UMP + CO2. The protein operates within pyrimidine metabolism; UMP biosynthesis via de novo pathway; UMP from orotate: step 2/2. In terms of biological role, catalyzes the decarboxylation of orotidine 5'-monophosphate (OMP) to uridine 5'-monophosphate (UMP). In Escherichia coli (strain 55989 / EAEC), this protein is Orotidine 5'-phosphate decarboxylase.